A 381-amino-acid polypeptide reads, in one-letter code: tRNA-specific 2-thiouridylase MnmA (381 aa).

ATP contacts are provided by residues 14–21 (AMSGGVDS) and Met40. Catalysis depends on Cys108, which acts as the Nucleophile. A disulfide bond links Cys108 and Cys205. ATP is bound at residue Gly132. The interaction with tRNA stretch occupies residues 155–157 (KDQ). Catalysis depends on Cys205, which acts as the Cysteine persulfide intermediate. Residues 309-310 (RY) are interaction with tRNA.

This sequence belongs to the MnmA/TRMU family.

It localises to the cytoplasm. The enzyme catalyses S-sulfanyl-L-cysteinyl-[protein] + uridine(34) in tRNA + AH2 + ATP = 2-thiouridine(34) in tRNA + L-cysteinyl-[protein] + A + AMP + diphosphate + H(+). In terms of biological role, catalyzes the 2-thiolation of uridine at the wobble position (U34) of tRNA, leading to the formation of s(2)U34. The protein is tRNA-specific 2-thiouridylase MnmA of Deinococcus geothermalis (strain DSM 11300 / CIP 105573 / AG-3a).